A 314-amino-acid polypeptide reads, in one-letter code: Olfactory receptor 5P62 (314 aa).

Topologically, residues 1–28 (MAFIYNGSQTTVTEFILLGLTDDPVLKV) are extracellular. Residue Asn-6 is glycosylated (N-linked (GlcNAc...) asparagine). A helical transmembrane segment spans residues 29 to 49 (ILFCIILCIYLVTVFGNLSTI). Over 50–57 (LLIGVSSK) the chain is Cytoplasmic. Residues 58-78 (LHHPMYFFLSHLASVDMGLSS) form a helical membrane-spanning segment. The Extracellular segment spans residues 79-102 (SVTPNMLVNFLTEKNTISYLGCGI). Cys-100 and Cys-192 are joined by a disulfide. The helical transmembrane segment at 103 to 123 (QLSSAAFFGAVEFFLLAAMAY) threads the bilayer. Residues 124–136 (DRLVAICNPLLYS) lie on the Cytoplasmic side of the membrane. The helical transmembrane segment at 137 to 157 (TKMSSQVCIQLVAGSYVGGFL) threads the bilayer. The Extracellular portion of the chain corresponds to 158-199 (NASFVTHFFFSFLFCGPNRVNHFFCDLSPMMELSCSDVSISE). Residues 200-220 (IVISFSAGSFTMTTLFVIVIP) form a helical membrane-spanning segment. At 221–240 (YFYIFITILKIRSTEGRQKA) the chain is on the cytoplasmic side. The chain crosses the membrane as a helical span at residues 241 to 261 (FSTCTSHLTAVTLYYGTIIFI). At 262-274 (YVMPKSTYSRDQN) the chain is on the extracellular side. The helical transmembrane segment at 275 to 295 (KVVSLFYMLVIPVLNPLIYSL) threads the bilayer. At 296–314 (RNNEIKDALKRQFYRKTLL) the chain is on the cytoplasmic side.

It belongs to the G-protein coupled receptor 1 family.

The protein resides in the cell membrane. Its function is as follows. Potential odorant receptor. This is Olfactory receptor 5P62 from Mus musculus (Mouse).